The chain runs to 118 residues: p-cumate 2,3-dioxygenase system, ferredoxin component (118 aa).

Residues 14–111 (VGLCATDDVA…VTVEGGQIFV (98 aa)) enclose the Rieske domain. 4 residues coordinate [2Fe-2S] cluster: Cys-54, His-56, Cys-74, and His-77.

The protein belongs to the bacterial ring-hydroxylating dioxygenase ferredoxin component family. The p-cumate 2,3-dioxygenase multicomponent enzyme system is composed of an electron transfer component and a dioxygenase component (iron sulfur protein (ISP)). The electron transfer component is composed of a ferredoxin reductase (CmtAa) and a ferredoxin (CmtAd), and the dioxygenase component is formed of a large alpha subunit (CmtAb) and a small beta subunit (CmtAc). [2Fe-2S] cluster is required as a cofactor.

It participates in aromatic compound metabolism; p-cumate degradation; acetaldehyde and pyruvate from p-cumate. In terms of biological role, component of the p-cumate 2,3-dioxygenase multicomponent enzyme system which catalyzes the incorporation of both atoms of molecular oxygen into p-cumate to form cis-2,3-dihydroxy-2,3-dihydro-p-cumate. Functions as an intermediate electron transfer protein via a specific interaction with iron sulfur protein components (ISP)(CmtAb and CmtAc). The protein is p-cumate 2,3-dioxygenase system, ferredoxin component of Pseudomonas putida (Arthrobacter siderocapsulatus).